A 282-amino-acid chain; its full sequence is MSRLHATILTVFPEMFPGTLGHSLAGQALQKNIWSYDVINIRDFGLTKHKNVDDEAYGGGDGLIMRPDVLGNAIDHALSLNPRAKIYYPSPRGKVFTQGFAKEILRDIQLNSESFRQDEFKEEPAEHIIIREQRRMPQNSLVSSLLNDAVNMIFLCGRYEGIDERVIEEYNITEISVGDYILSGGEIPTLTILDCLIRLLPGVLMNQNTLASESFEKDGEFEGGLECGLYTRPEVWYNRKVPSVLLSGNHKLINEWKKEQSLMITKLRRPELLKDLRDKERS.

Residues G157 and 177–182 (VGDYIL) each bind S-adenosyl-L-methionine.

This sequence belongs to the RNA methyltransferase TrmD family. Homodimer.

The protein resides in the cytoplasm. The enzyme catalyses guanosine(37) in tRNA + S-adenosyl-L-methionine = N(1)-methylguanosine(37) in tRNA + S-adenosyl-L-homocysteine + H(+). Specifically methylates guanosine-37 in various tRNAs. In Rickettsia bellii (strain RML369-C), this protein is tRNA (guanine-N(1)-)-methyltransferase.